We begin with the raw amino-acid sequence, 621 residues long: 1-deoxy-D-xylulose-5-phosphate synthase (621 aa).

Thiamine diphosphate contacts are provided by residues His80 and 121 to 123 (GHS). Residue Asp152 participates in Mg(2+) binding. Residues 153 to 154 (GA), Asn181, Tyr288, and Glu370 each bind thiamine diphosphate. Asn181 provides a ligand contact to Mg(2+).

Belongs to the transketolase family. DXPS subfamily. As to quaternary structure, homodimer. Mg(2+) is required as a cofactor. It depends on thiamine diphosphate as a cofactor.

It carries out the reaction D-glyceraldehyde 3-phosphate + pyruvate + H(+) = 1-deoxy-D-xylulose 5-phosphate + CO2. Its pathway is metabolic intermediate biosynthesis; 1-deoxy-D-xylulose 5-phosphate biosynthesis; 1-deoxy-D-xylulose 5-phosphate from D-glyceraldehyde 3-phosphate and pyruvate: step 1/1. Functionally, catalyzes the acyloin condensation reaction between C atoms 2 and 3 of pyruvate and glyceraldehyde 3-phosphate to yield 1-deoxy-D-xylulose-5-phosphate (DXP). The sequence is that of 1-deoxy-D-xylulose-5-phosphate synthase from Vibrio parahaemolyticus serotype O3:K6 (strain RIMD 2210633).